We begin with the raw amino-acid sequence, 879 residues long: Fanconi anemia core complex-associated protein 100 (879 aa).

As to quaternary structure, belongs to the multisubunit FA complex composed of FANCA, FANCB, FANCC, FANCE, FANCF, FANCG, FANCL/PHF9, FANCM, FAAP24 and FAAP100. Forms a subcomplex with FANCB and FANCL.

Its subcellular location is the nucleus. Its function is as follows. Plays a role in Fanconi anemia-associated DNA damage response network. Regulates FANCD2 monoubiquitination and the stability of the FA core complex. Induces chromosomal instability as well as hypersensitivity to DNA cross-linking agents, when repressed. The sequence is that of Fanconi anemia core complex-associated protein 100 from Mus musculus (Mouse).